Here is a 321-residue protein sequence, read N- to C-terminus: Lipoyl synthase (321 aa).

Positions 68, 73, 79, 94, 98, 101, and 308 each coordinate [4Fe-4S] cluster. The region spanning 80 to 297 (FNHGTATFMI…KEEAMAMGFT (218 aa)) is the Radical SAM core domain.

Belongs to the radical SAM superfamily. Lipoyl synthase family. It depends on [4Fe-4S] cluster as a cofactor.

It is found in the cytoplasm. It carries out the reaction [[Fe-S] cluster scaffold protein carrying a second [4Fe-4S](2+) cluster] + N(6)-octanoyl-L-lysyl-[protein] + 2 oxidized [2Fe-2S]-[ferredoxin] + 2 S-adenosyl-L-methionine + 4 H(+) = [[Fe-S] cluster scaffold protein] + N(6)-[(R)-dihydrolipoyl]-L-lysyl-[protein] + 4 Fe(3+) + 2 hydrogen sulfide + 2 5'-deoxyadenosine + 2 L-methionine + 2 reduced [2Fe-2S]-[ferredoxin]. It functions in the pathway protein modification; protein lipoylation via endogenous pathway; protein N(6)-(lipoyl)lysine from octanoyl-[acyl-carrier-protein]: step 2/2. Its function is as follows. Catalyzes the radical-mediated insertion of two sulfur atoms into the C-6 and C-8 positions of the octanoyl moiety bound to the lipoyl domains of lipoate-dependent enzymes, thereby converting the octanoylated domains into lipoylated derivatives. This Serratia proteamaculans (strain 568) protein is Lipoyl synthase.